Consider the following 137-residue polypeptide: Proofreading thioesterase EntH (137 aa).

Glu-63 functions as the Nucleophile or proton acceptor in the catalytic mechanism.

This sequence belongs to the thioesterase PaaI family. As to quaternary structure, homotetramer. Dimer of dimers. Interacts specifically with the aryl carrier protein (ArCP) domain of EntB.

It localises to the cytoplasm. Its pathway is siderophore biosynthesis; enterobactin biosynthesis. Required for optimal enterobactin synthesis. Acts as a proofreading enzyme that prevents EntB misacylation by hydrolyzing the thioester bound existing between EntB and wrongly charged molecules. The sequence is that of Proofreading thioesterase EntH from Salmonella paratyphi A (strain AKU_12601).